Reading from the N-terminus, the 404-residue chain is Argininosuccinate synthase (404 aa).

Residues 12-20 (AYSGGLDTS) and Ala40 each bind ATP. 2 residues coordinate L-citrulline: Tyr92 and Ser97. Gly122 serves as a coordination point for ATP. Residues Thr124, Asn128, and Asp129 each coordinate L-aspartate. An L-citrulline-binding site is contributed by Asn128. Arg132, Ser181, Ser190, Glu266, and Tyr278 together coordinate L-citrulline.

It belongs to the argininosuccinate synthase family. Type 1 subfamily. In terms of assembly, homotetramer.

It is found in the cytoplasm. It carries out the reaction L-citrulline + L-aspartate + ATP = 2-(N(omega)-L-arginino)succinate + AMP + diphosphate + H(+). Its pathway is amino-acid biosynthesis; L-arginine biosynthesis; L-arginine from L-ornithine and carbamoyl phosphate: step 2/3. This chain is Argininosuccinate synthase, found in Photorhabdus laumondii subsp. laumondii (strain DSM 15139 / CIP 105565 / TT01) (Photorhabdus luminescens subsp. laumondii).